Consider the following 412-residue polypeptide: Multifunctional CCA protein (412 aa).

Positions 8 and 11 each coordinate ATP. CTP is bound by residues Gly-8 and Arg-11. Mg(2+) contacts are provided by Asp-21 and Asp-23. 3 residues coordinate ATP: Arg-91, Arg-137, and Arg-140. CTP-binding residues include Arg-91, Arg-137, and Arg-140. The 102-residue stretch at 228-329 (TGIHTLMTLS…VKLFDSIDAW (102 aa)) folds into the HD domain.

The protein belongs to the tRNA nucleotidyltransferase/poly(A) polymerase family. Bacterial CCA-adding enzyme type 1 subfamily. Monomer. Can also form homodimers and oligomers. Requires Mg(2+) as cofactor. Ni(2+) serves as cofactor.

It carries out the reaction a tRNA precursor + 2 CTP + ATP = a tRNA with a 3' CCA end + 3 diphosphate. It catalyses the reaction a tRNA with a 3' CCA end + 2 CTP + ATP = a tRNA with a 3' CCACCA end + 3 diphosphate. Catalyzes the addition and repair of the essential 3'-terminal CCA sequence in tRNAs without using a nucleic acid template. Adds these three nucleotides in the order of C, C, and A to the tRNA nucleotide-73, using CTP and ATP as substrates and producing inorganic pyrophosphate. tRNA 3'-terminal CCA addition is required both for tRNA processing and repair. Also involved in tRNA surveillance by mediating tandem CCA addition to generate a CCACCA at the 3' terminus of unstable tRNAs. While stable tRNAs receive only 3'-terminal CCA, unstable tRNAs are marked with CCACCA and rapidly degraded. The sequence is that of Multifunctional CCA protein from Shigella dysenteriae serotype 1 (strain Sd197).